We begin with the raw amino-acid sequence, 89 residues long: Neuropeptide S (89 aa).

The N-terminal stretch at Met-1–Cys-23 is a signal peptide. A propeptide spanning residues Tyr-24–Val-67 is cleaved from the precursor.

The protein resides in the secreted. Functionally, modulates arousal and anxiety. May play an important anorexigenic role. Binds to its receptor NPSR1 with nanomolar affinity to increase intracellular calcium concentrations. The chain is Neuropeptide S (NPS) from Homo sapiens (Human).